A 402-amino-acid polypeptide reads, in one-letter code: MTDVKNDVNVSSVVDADGLIEGNYDQVVESFDDMELKEELLRGIYGFGFEKPSAIQKRAIVPCTTGKDVIAQAQSGTGKTATFSVSILQRIDHEDPHVQALVMAPTRELAQQIQKVMSALGEYLNVNILPCIGGTSVRDDQRKLEAGIHVVVGTPGRVGDMINRNALDTSRIKMFVLDEADEMLSRGFKDQIYEVFRSMPQDVQVVLLSATMPSEVLDVTNRFMRNPIRILVKKDELTLEGIRQFYINVQKDEWKFDCLCDLYNVVNVTQAVIFCNTRRKVDTLTEKMTENQFTVSCLHGDMDQAERDTIMREFRSGSSRVLITTDILARGIDVQQVSLVINYDLPSNRENYIHRIGRSGRFGRKGVAINFVTENDARQLKEIESYYTTQIEEMPESIADLI.

The short motif at 29–57 is the Q motif element; sequence ESFDDMELKEELLRGIYGFGFEKPSAIQK. The Helicase ATP-binding domain maps to 60–230; sequence IVPCTTGKDV…NRFMRNPIRI (171 aa). 73 to 80 contacts ATP; sequence AQSGTGKT. Positions 178–181 match the DEAD box motif; it reads DEAD. The Helicase C-terminal domain occupies 241 to 402; sequence GIRQFYINVQ…EMPESIADLI (162 aa).

It belongs to the DEAD box helicase family. eIF4A subfamily. As to quaternary structure, eIF4F is a multi-subunit complex, the composition of which varies with external and internal environmental conditions. It is composed of at least EIF4A, EIF4E and EIF4G.

It carries out the reaction ATP + H2O = ADP + phosphate + H(+). Its function is as follows. ATP-dependent RNA helicase which is a subunit of the eIF4F complex involved in cap recognition and is required for mRNA binding to ribosome. In the current model of translation initiation, eIF4A unwinds RNA secondary structures in the 5'-UTR of mRNAs which is necessary to allow efficient binding of the small ribosomal subunit, and subsequent scanning for the initiator codon. The protein is Eukaryotic initiation factor 4A (inf-1) of Caenorhabditis elegans.